Here is a 314-residue protein sequence, read N- to C-terminus: Methionyl-tRNA formyltransferase (314 aa).

110–113 (SLLP) is a binding site for (6S)-5,6,7,8-tetrahydrofolate.

It belongs to the Fmt family.

It carries out the reaction L-methionyl-tRNA(fMet) + (6R)-10-formyltetrahydrofolate = N-formyl-L-methionyl-tRNA(fMet) + (6S)-5,6,7,8-tetrahydrofolate + H(+). Functionally, attaches a formyl group to the free amino group of methionyl-tRNA(fMet). The formyl group appears to play a dual role in the initiator identity of N-formylmethionyl-tRNA by promoting its recognition by IF2 and preventing the misappropriation of this tRNA by the elongation apparatus. The chain is Methionyl-tRNA formyltransferase from Lactobacillus acidophilus (strain ATCC 700396 / NCK56 / N2 / NCFM).